We begin with the raw amino-acid sequence, 365 residues long: MDIIETAKLEEHLENQPSDPTNTYARPAEPVEEENKNGNGKPKSLSSGLRKGTKKYPDYIQIAMPTESRNKFPLEWWKTGIAFIYAVFNLVLTTVMITVVHERVPPKELSPPLPDKFFDYIDRVKWAFSVSEINGIILVGLWITQWLFLRYKSIVGRRFCFIIGTLYLYRCITMYVTTLPVPGMHFQCAPKLNGDSQAKVQRILRLISGGGLSITGSHILCGDFLFSGHTVTLTLTYLFIKEYSPRHFWWYHLICWLLSAAGIICILVAHEHYTIDVIIAYYITTRLFWWYHSMANEKNLKVSSQTNFLSRAWWFPIFYFFEKNVQGSIPCCFSWPLSWPPGCFKSSCKKYSRVQKIGEDNEKST.

Residues 1–14 are compositionally biased toward basic and acidic residues; the sequence is MDIIETAKLEEHLE. The disordered stretch occupies residues 1 to 52; the sequence is MDIIETAKLEEHLENQPSDPTNTYARPAEPVEEENKNGNGKPKSLSSGLRKG. Polar residues predominate over residues 15–24; it reads NQPSDPTNTY. 4 helical membrane passes run 80-100, 128-148, 159-179, and 206-226; these read GIAF…ITVV, FSVS…QWLF, FCFI…VTTL, and LISG…DFLF. The active site involves His229. Residues 248-268 form a helical membrane-spanning segment; sequence FWWYHLICWLLSAAGIICILV. Active-site residues include His272 and Asp276. The helical transmembrane segment at 275-295 threads the bilayer; the sequence is IDVIIAYYITTRLFWWYHSMA. Over 296–365 the chain is Cytoplasmic; that stretch reads NEKNLKVSSQ…KIGEDNEKST (70 aa). Residues Cys331, Cys332, Cys343, and Cys348 are each lipidated (S-palmitoyl cysteine).

The protein belongs to the sphingomyelin synthase family. Post-translationally, palmitoylated on Cys-331, Cys-332, Cys-343 and Cys-348; which plays an important role in plasma membrane localization. Brain, heart, kidney, liver, muscle and stomach. Also expressed in a number of cell lines such as carcinoma HeLa cells, hepatoma Hep-G2 cells, and colon carcinoma Caco-2 cells.

Its subcellular location is the cell membrane. It is found in the golgi apparatus membrane. It carries out the reaction an N-acylsphing-4-enine + a 1,2-diacyl-sn-glycero-3-phosphocholine = a sphingomyelin + a 1,2-diacyl-sn-glycerol. It catalyses the reaction an N-acylsphinganine + a 1,2-diacyl-sn-glycero-3-phosphocholine = an N-acylsphinganine-1-phosphocholine + a 1,2-diacyl-sn-glycerol. The catalysed reaction is an N-acyl-(4R)-4-hydroxysphinganine + a 1,2-diacyl-sn-glycero-3-phosphocholine = an N-acyl-(4R)-4-hydroxysphinganine-phosphocholine + a 1,2-diacyl-sn-glycerol. The enzyme catalyses an N-acylsphinganine + a 1,2-diacyl-sn-glycero-3-phosphoethanolamine = an N-acylsphinganine-1-phosphoethanolamine + a 1,2-diacyl-sn-glycerol. It carries out the reaction an N-acyl-(4R)-4-hydroxysphinganine + a 1,2-diacyl-sn-glycero-3-phosphoethanolamine = an N-acyl-(4R)-4-hydroxysphinganine-1-phosphoethanolamine + a 1,2-diacyl-sn-glycerol. It catalyses the reaction an N-acylsphing-4-enine + a 1,2-diacyl-sn-glycero-3-phosphoethanolamine = an N-acylsphing-4-enine 1-phosphoethanolamine + a 1,2-diacyl-sn-glycerol. The catalysed reaction is 1,2-dihexadecanoyl-sn-glycero-3-phosphocholine + an N-acylsphing-4-enine = 1,2-dihexadecanoyl-sn-glycerol + a sphingomyelin. The enzyme catalyses 1-(9Z-octadecenoyl)-2-acyl-sn-3-glycerol + a sphingomyelin = a 1-(9Z-octadecenoyl)-2-acyl-sn-glycero-3-phosphocholine + an N-acylsphing-4-enine. It carries out the reaction N-hexadecanoylsphinganine + a 1,2-diacyl-sn-glycero-3-phosphocholine = N-hexadecanoyl-sphinganine-1-phosphocholine + a 1,2-diacyl-sn-glycerol. It catalyses the reaction N-hexadecanoyl-(4R)-hydroxysphinganine + a 1,2-diacyl-sn-glycero-3-phosphocholine = N-hexadecanoyl-(4R)-hydroxysphinganine-phosphocholine + a 1,2-diacyl-sn-glycerol. The catalysed reaction is N-hexadecanoylsphinganine + a 1,2-diacyl-sn-glycero-3-phosphoethanolamine = N-hexadecanoyl-sphinganine-1-phosphoethanolamine + a 1,2-diacyl-sn-glycerol. The enzyme catalyses N-hexadecanoyl-(4R)-hydroxysphinganine + a 1,2-diacyl-sn-glycero-3-phosphoethanolamine = N-hexadecanoyl-(4R)-hydroxysphinganine-1-phosphoethanolamine + a 1,2-diacyl-sn-glycerol. Its pathway is sphingolipid metabolism. Inhibited by bacterial PC-phospholipase C inhibitor D609. In terms of biological role, sphingomyelin synthase that primarily contributes to sphingomyelin synthesis and homeostasis at the plasma membrane. Catalyzes the reversible transfer of phosphocholine moiety in sphingomyelin biosynthesis: in the forward reaction transfers phosphocholine head group of phosphatidylcholine (PC) on to ceramide (CER) to form ceramide phosphocholine (sphingomyelin, SM) and diacylglycerol (DAG) as by-product, and in the reverse reaction transfers phosphocholine from SM to DAG to form PC and CER. The direction of the reaction appears to depend on the levels of CER and DAG in the plasma membrane. Does not use free phosphorylcholine or CDP-choline as donors. Can also transfer phosphoethanolamine head group of phosphatidylethanolamine (PE) on to ceramide (CER) to form ceramide phosphoethanolamine (CPE). Regulates receptor-mediated signal transduction via mitogenic DAG and proapoptotic CER, as well as via SM, a structural component of membrane rafts that serve as platforms for signal transduction and protein sorting. To a lesser extent, plays a role in secretory transport via regulation of DAG pool at the Golgi apparatus and its downstream effects on PRKD1. Required for normal bone matrix mineralization. This chain is Phosphatidylcholine:ceramide cholinephosphotransferase 2, found in Homo sapiens (Human).